The sequence spans 504 residues: Xylose import ATP-binding protein XylG (504 aa).

ABC transporter domains follow at residues 5-242 and 259-500; these read LEMK…VGRE and LRVE…VMEA. ATP is bound at residue 37 to 44; that stretch reads GENGSGKS.

Belongs to the ABC transporter superfamily. Xylose importer (TC 3.A.1.2.4) family. As to quaternary structure, the complex is composed of two ATP-binding proteins (XylG), two transmembrane proteins (XylH) and a solute-binding protein (XylF).

It is found in the cell inner membrane. The catalysed reaction is D-xylose(out) + ATP + H2O = D-xylose(in) + ADP + phosphate + H(+). Its function is as follows. Part of the ABC transporter complex XylFGH involved in xylose import. Responsible for energy coupling to the transport system. This chain is Xylose import ATP-binding protein XylG, found in Histophilus somni (strain 129Pt) (Haemophilus somnus).